The chain runs to 160 residues: Phosphopantetheine adenylyltransferase (160 aa).

Ser9 is a binding site for substrate. ATP-binding positions include 9–10 (SF) and His17. Lys41, Val73, and Lys87 together coordinate substrate. ATP contacts are provided by residues 88–90 (GLR), Glu98, and 122–128 (YSFVSSS).

Belongs to the bacterial CoaD family. Homohexamer. Mg(2+) is required as a cofactor.

It localises to the cytoplasm. It carries out the reaction (R)-4'-phosphopantetheine + ATP + H(+) = 3'-dephospho-CoA + diphosphate. The protein operates within cofactor biosynthesis; coenzyme A biosynthesis; CoA from (R)-pantothenate: step 4/5. Reversibly transfers an adenylyl group from ATP to 4'-phosphopantetheine, yielding dephospho-CoA (dPCoA) and pyrophosphate. The protein is Phosphopantetheine adenylyltransferase of Mycobacterium leprae (strain TN).